We begin with the raw amino-acid sequence, 163 residues long: Large ribosomal subunit protein uL10 (163 aa).

It belongs to the universal ribosomal protein uL10 family. Part of the ribosomal stalk of the 50S ribosomal subunit. The N-terminus interacts with L11 and the large rRNA to form the base of the stalk. The C-terminus forms an elongated spine to which L12 dimers bind in a sequential fashion forming a multimeric L10(L12)X complex.

In terms of biological role, forms part of the ribosomal stalk, playing a central role in the interaction of the ribosome with GTP-bound translation factors. The polypeptide is Large ribosomal subunit protein uL10 (rplJ) (Haemophilus influenzae (strain ATCC 51907 / DSM 11121 / KW20 / Rd)).